A 171-amino-acid polypeptide reads, in one-letter code: MASEAERTFQRFAVFGESSSSGTEMNNKNFSKLCKDCGIMDGKTVTSTDVDIVFSKVKAKNARTITFQQFQEAMKELGQKRFKGKSPDEALENIYKLMEGKDPATTGVTKATTVGGVSRLTDTSKYTGTHKERFDESGKGKGIAGREDVTDNSGYVSGYKGAGTYDKKGSN.

Positions 120 to 171 (LTDTSKYTGTHKERFDESGKGKGIAGREDVTDNSGYVSGYKGAGTYDKKGSN) are disordered. Residues 129 to 149 (THKERFDESGKGKGIAGREDV) show a composition bias toward basic and acidic residues.

This sequence belongs to the TPPP family.

It localises to the cytoplasm. It is found in the cytosol. The protein localises to the cell projection. Its subcellular location is the cilium. The protein resides in the flagellum. Functionally, probable regulator of microtubule dynamics required for sperm motility. In contrast to other members of the family, has no microtubule bundling activity. This chain is Tubulin polymerization-promoting protein family member 2, found in Bos taurus (Bovine).